A 325-amino-acid chain; its full sequence is MTYSKNVFVPVTNICRNRCGYCGFRREPGQPGARLMKPEEILPVLENGAKAGCTEALFTFGEYAEEVSEYRKWLKKLGYSSTLEYLLFLCEASIDIGILPHTNAGIMTRTELKALKPLNASMGLMLESTATLDAHKDCPGKLPELRLNTIREAGKLQIPYTTGLLIGIGEIREDRIESLEAIAGLHREYGHIQEVIIQNFAPKPGTPMENFPAPSIEEIIDTICLARQILPSDIAVQVAPNLIDPKALIAKGVTDLGGISPLTIDWINPEAEWPDIKELQRKLSPILLKERLPIYPQYVRKKWYSDRIGGLIEQLSDTDGYRKKP.

The region spanning 1–241 is the Radical SAM core domain; that stretch reads MTYSKNVFVP…SDIAVQVAPN (241 aa). [4Fe-4S] cluster contacts are provided by Cys-15, Cys-19, and Cys-22.

This sequence belongs to the radical SAM superfamily. CofG family. As to quaternary structure, consists of two subunits, CofG and CofH. Requires [4Fe-4S] cluster as cofactor.

The catalysed reaction is 5-amino-5-(4-hydroxybenzyl)-6-(D-ribitylimino)-5,6-dihydrouracil + S-adenosyl-L-methionine = 7,8-didemethyl-8-hydroxy-5-deazariboflavin + 5'-deoxyadenosine + L-methionine + NH4(+) + H(+). It functions in the pathway cofactor biosynthesis; coenzyme F0 biosynthesis. Catalyzes the radical-mediated synthesis of 7,8-didemethyl-8-hydroxy-5-deazariboflavin from 5-amino-5-(4-hydroxybenzyl)-6-(D-ribitylimino)-5,6-dihydrouracil. The polypeptide is 7,8-didemethyl-8-hydroxy-5-deazariboflavin synthase (Methanosarcina barkeri (strain Fusaro / DSM 804)).